We begin with the raw amino-acid sequence, 278 residues long: S-formylglutathione hydrolase YeiG (278 aa).

Active-site charge relay system residues include Ser145, Asp223, and His256.

The protein belongs to the esterase D family.

The catalysed reaction is S-formylglutathione + H2O = formate + glutathione + H(+). Its function is as follows. Serine hydrolase involved in the detoxification of formaldehyde. Hydrolyzes S-formylglutathione to glutathione and formate. The chain is S-formylglutathione hydrolase YeiG (yeiG) from Escherichia coli O157:H7.